The chain runs to 613 residues: MTLITPAINSSRRKTHTVRIGNLYIGSDHSIKTQSMTTTLTTDIDSTVEQIYALAEHNCDIVRVTVQGIKEAQACEKIKERLIALGLNIPLVADIHFFPQAAMLVADFADKVRINPGNYIDKRNMFKGTKIYTEASYAQSLLRLEEKFAPLVEKCKRLGKAMRIGVNHGSLSERIMQKYGDTIEGMVASAIEYIAVCEKLNYRDVVFSMKSSNPKIMVTAYRQLAKDLDARGWLYPLHLGVTEAGMGVDGIIKSAVGIGTLLAEGLGDTIRCSLTGCPTTEIPVCDSLLRHTKIYLDLPEKKNPFSLQHSENFVSAAEKPAKTTLWGDVYGVFLKLYPHHLTDFTPEELLEHLGVNPVTKEKAFTTPEGVVVPPELKDAPITDVLREHFLVFHHHQVPCLYEHNEEIWDSPAVHQAPFVHFHASDPFIHTSRDFFEKQGHQGKPTKLVFSRDFDNKEEAAISIATEFGALLLDGLGEAVVLDLPNLPLQDVLKIAFGTLQNAGVRLVKTEYISCPMCGRTLFDLEEVTTRIRKRTQHLPGLKIAIMGCIVNGPGEMADADFGFVGSKTGMIDLYVKHTCVKAHIPMEDAEEELIRLLQEHGVWKDPEETKLTV.

[4Fe-4S] cluster contacts are provided by C514, C517, C548, and E555.

This sequence belongs to the IspG family. [4Fe-4S] cluster is required as a cofactor.

The catalysed reaction is (2E)-4-hydroxy-3-methylbut-2-enyl diphosphate + oxidized [flavodoxin] + H2O + 2 H(+) = 2-C-methyl-D-erythritol 2,4-cyclic diphosphate + reduced [flavodoxin]. It functions in the pathway isoprenoid biosynthesis; isopentenyl diphosphate biosynthesis via DXP pathway; isopentenyl diphosphate from 1-deoxy-D-xylulose 5-phosphate: step 5/6. Functionally, converts 2C-methyl-D-erythritol 2,4-cyclodiphosphate (ME-2,4cPP) into 1-hydroxy-2-methyl-2-(E)-butenyl 4-diphosphate. The polypeptide is 4-hydroxy-3-methylbut-2-en-1-yl diphosphate synthase (flavodoxin) (Chlamydia pneumoniae (Chlamydophila pneumoniae)).